A 405-amino-acid chain; its full sequence is MPEPVAEPALNGLRLNLRIVSIVMFNFASYLTIGLPLAVLPGYVHDAMGFSAFWAGLIISLQYFATLLSRPHAGRYADVLGPKKIVVFGLCGCFLSGLGYLLADIASAWPMISLLLLGLGRVILGIGQSFAGTGSTLWGVGVVGSLHIGRVISWNGIVTYGAMAMGAPLGVLCYAWGGLQGLALTVMGVALLAVLLALPRPSVKANKGKPLPFRAVLGRVWLYGMALALASAGFGVIATFITLFYDAKGWDGAAFALTLFSVAFVGTRLLFPNGINRLGGLNVAMICFGVEIIGLLLVGTAAMPWMAKIGVLLTGMGFSLVFPALGVVAVKAVPPQNQGAALATYTVFMDMSLGVTGPLAGLVMTWAGVPVIYLAAAGLVAMALLLTWRLKKRPPSALPEAASSS.

The next 13 membrane-spanning stretches (helical) occupy residues 19 to 39 (IVSI…PLAV), 48 to 68 (MGFS…ATLL), 85 to 105 (IVVF…LADI), 106 to 126 (ASAW…ILGI), 129 to 149 (SFAG…LHIG), 156 to 176 (GIVT…CYAW), 178 to 198 (GLQG…LLAL), 224 to 244 (GMAL…ITLF), 252 to 272 (GAAF…LLFP), 283 to 303 (VAMI…TAAM), 309 to 329 (IGVL…GVVA), 344 to 364 (TYTV…GLVM), and 366 to 386 (WAGV…ALLL).

It belongs to the major facilitator superfamily. YhhS family.

It localises to the cell inner membrane. This is an uncharacterized protein from Salmonella enteritidis PT4 (strain P125109).